A 294-amino-acid chain; its full sequence is Lipoprotein NlpI (294 aa).

Positions 1–18 (MKPFLRWCFVATALTLAG) are cleaved as a signal peptide. Cys19 carries N-palmitoyl cysteine lipidation. Cys19 carries S-diacylglycerol cysteine lipidation. TPR repeat units lie at residues 62-95 (AQLL…RPDM), 96-129 (PEVF…DPTY), and 234-267 (SETN…NVHN).

As to quaternary structure, homodimer.

The protein localises to the cell membrane. Functionally, may be involved in cell division. May play a role in bacterial septation or regulation of cell wall degradation during cell division. The sequence is that of Lipoprotein NlpI (nlpI) from Shigella boydii serotype 4 (strain Sb227).